Here is a 542-residue protein sequence, read N- to C-terminus: MATVGTEEKNPIGSASNTAEPNVTEPQKQYASGFKLTIIVISLCLSLFLCGLDQTIITTAVPIITNDFKAIEDVGWYTTAYLLTTSSFQIAYGKLYTTLSVKMILLMALAIFELGSIICAAAPNSTTLIVGRAIAGLGAAGIFPGSTLVLVHAAPMERRPALLGITTGMFGIASLCGPFIGGAFADGASWRWCFIINVPLGVITAVIVTFFVFTPVDPLYAEWTFKDKLAYAKIPEILVLVAALVCLVLGLQWGGTTYAWSDGRIIALLVVFAVLTTAFLVLQVLLPKSRTIPTSIVKNRNIWFASIFALCSSGAMFIAVTYLPIYFQAIKNASALSSGVNVMPLILGFLVMSIISGVITNTTGYYNPSMFLCTILASVGAGLVSTFDVGTPQPKWIGYQALLGFGIGFGLQQPIVCAQHVLDERDVPFGVAFINMMQMLGGAIFVAVSQNVFLNGLANGIAEALPGFNTHKIIEGGLTDFKNLFTSDQLPKAIPVYAHVLGQVFLIATGLCVGTLLGSLGVQWRSVKKAKVTEDQADVERK.

The segment covering 1 to 10 (MATVGTEEKN) has biased composition (basic and acidic residues). Residues 1–24 (MATVGTEEKNPIGSASNTAEPNVT) are disordered. Positions 13 to 24 (GSASNTAEPNVT) are enriched in polar residues. An N-linked (GlcNAc...) asparagine glycan is attached at Asn-22. The next 3 membrane-spanning stretches (helical) occupy residues 32-52 (SGFK…LCGL), 75-97 (GWYT…KLYT), and 103-123 (MILL…AAAP). N-linked (GlcNAc...) asparagine glycosylation occurs at Asn-124. Transmembrane regions (helical) follow at residues 133–153 (AIAG…LVHA), 161–181 (ALLG…PFIG), 193–213 (CFII…FFVF), 234–254 (IPEI…LQWG), 265–285 (IIAL…LQVL), and 307–327 (IFAL…PIYF). A glycan (N-linked (GlcNAc...) asparagine) is linked at Asn-332. Residues 339-359 (GVNVMPLILGFLVMSIISGVI) traverse the membrane as a helical segment. Asn-361 is a glycosylation site (N-linked (GlcNAc...) asparagine). A run of 4 helical transmembrane segments spans residues 370-390 (MFLC…FDVG), 396-416 (WIGY…QPIV), 427-447 (VPFG…IFVA), and 500-520 (VLGQ…LGSL).

Belongs to the major facilitator superfamily.

It is found in the cell membrane. Functionally, MFS efflux transporter probably involved in thioclapurine export. The protein is MFS thioclapurine efflux transporter tcpA of Claviceps purpurea (strain 20.1) (Ergot fungus).